A 471-amino-acid chain; its full sequence is Cytochrome b-c1 complex subunit 1, mitochondrial (471 aa).

The protein belongs to the peptidase M16 family.

It localises to the mitochondrion matrix. In Caenorhabditis elegans, this protein is Cytochrome b-c1 complex subunit 1, mitochondrial (ucr-1).